Reading from the N-terminus, the 125-residue chain is Oxytocin-neurophysin 1 (125 aa).

Residues Met1 to Ala19 form the signal peptide. Residues Cys20 and Cys25 are joined by a disulfide bond. At Gly28 the chain carries Glycine amide. 7 cysteine pairs are disulfide-bonded: Cys41-Cys85, Cys44-Cys58, Cys52-Cys75, Cys59-Cys65, Cys92-Cys104, Cys98-Cys116, and Cys105-Cys110.

It belongs to the vasopressin/oxytocin family. Interacts with oxytocin receptor (Ki=1.5 nM). Interacts with vasopressin V1aR/AVPR1A (Ki=37 nM), V1bR/AVPR1B (Ki=222 nM) and V2R/AVPR2 receptors (Ki=823 nM).

The protein localises to the secreted. In terms of biological role, neurophysin 1 specifically binds oxytocin. Its function is as follows. Oxytocin causes contraction of the smooth muscle of the uterus and of the mammary gland. Acts by binding to oxytocin receptor (OXTR). The protein is Oxytocin-neurophysin 1 (OXT) of Homo sapiens (Human).